The following is a 586-amino-acid chain: Terminase, large subunit (586 aa).

The tract at residues 1–229 is ATPase activity; that stretch reads MSTQSNRNAL…TIIWPALYPR (229 aa). The short motif at 58 to 65 is the Walker A motif element; it reads AFRGIGKS. The Walker B motif motif lies at 156-161; it reads IIIADD. The interval 344–429 is nuclease activity; it reads HSYHSCSQNT…ESNFGDGMFG (86 aa). Residues Asp364, Glu420, and Asp518 each contribute to the Mg(2+) site. The segment at 571-586 is involved in prohead binding; sequence LYWEDDDVNGDRFINW.

Belongs to the Teseptimavirus large terminase family. In terms of assembly, homopentamer. Interacts with the terminase small subunit; the active complex is probably heterooligomeric. Interacts with the portal protein. Mg(2+) serves as cofactor.

Functionally, the terminase large subunit acts as an ATP driven molecular motor necessary for viral DNA translocation into empty capsids and as an endonuclease that cuts the viral genome at a unique and precise dsDNA sequence to initiate and to end a packaging reaction. The terminase lies at a unique vertex of the procapsid and is composed of two subunits, a small terminase subunit involved in viral DNA recognition (packaging sequence), and a large terminase subunit possessing endonucleolytic and ATPase activities. Both terminase subunits heterooligomerize and are docked on the portal protein to form the packaging machine. The terminase large subunit exhibits endonuclease activity and cleaves the viral genome concatemer. Once the DNA is packaged, the terminase detaches from the connector and gets replaced by the tail to finish maturation of the virion. This Escherichia coli (Bacteriophage T3) protein is Terminase, large subunit (19).